A 359-amino-acid polypeptide reads, in one-letter code: Nicotinate-nucleotide--dimethylbenzimidazole phosphoribosyltransferase (359 aa).

The Proton acceptor role is filled by Glu318.

The protein belongs to the CobT family. As to quaternary structure, homodimer.

It catalyses the reaction 5,6-dimethylbenzimidazole + nicotinate beta-D-ribonucleotide = alpha-ribazole 5'-phosphate + nicotinate + H(+). The protein operates within nucleoside biosynthesis; alpha-ribazole biosynthesis; alpha-ribazole from 5,6-dimethylbenzimidazole: step 1/2. Functionally, catalyzes the synthesis of alpha-ribazole-5'-phosphate from nicotinate mononucleotide (NAMN) and 5,6-dimethylbenzimidazole (DMB). The polypeptide is Nicotinate-nucleotide--dimethylbenzimidazole phosphoribosyltransferase (Shigella flexneri serotype 5b (strain 8401)).